Reading from the N-terminus, the 142-residue chain is Midkine-B (142 aa).

Positions 1–20 (MELRAFCVILLITILAVSSQ) are cleaved as a signal peptide. 5 disulfides stabilise this stretch: Cys-36–Cys-60, Cys-44–Cys-69, Cys-51–Cys-73, Cys-83–Cys-115, and Cys-93–Cys-125.

It belongs to the pleiotrophin family. In terms of tissue distribution, in adults, expression is highest in the brain, eye and bone, with lower expression in the heart and lung. Not expressed in the ovary. In the tailbud stage embryo, expressed in the head and tail regions as well as in the central nervous system (CNS).

The protein resides in the secreted. In terms of biological role, secreted protein that functions as a cytokine and growth factor and mediates its signal through cell-surface proteoglycan and non-proteoglycan receptors. Binds cell-surface proteoglycan receptors via their chondroitin sulfate (CS) groups. Thereby regulates many processes like inflammatory response, cell proliferation, cell adhesion, cell growth, cell survival, tissue regeneration, cell differentiation and cell migration. Inhibits mesoderm formation and promotes neural formation during development. Plays a role in development of the neuromuscular junction (NMJ). Has antibacterial activity against both Gram-positive and Gram-negative bacteria. This chain is Midkine-B (mdk-b), found in Xenopus laevis (African clawed frog).